A 280-amino-acid polypeptide reads, in one-letter code: 30 kDa immediate-early protein 2 (280 aa).

The tract at residues 36-164 (SEEEQGEEVE…KKSKRISELD (129 aa)) is disordered. 3 stretches are compositionally biased toward low complexity: residues 47–67 (RGAT…TSPT), 90–101 (SSSSSSCSSASD), and 132–147 (AASS…SSGG).

Its function is as follows. Activates the E1.7 promoter. This activation is augmented by the IE1 protein. It down-regulates the transcription of genes under the control of the major IE promoter. The polypeptide is 30 kDa immediate-early protein 2 (UL122) (Human cytomegalovirus (strain Towne) (HHV-5)).